Here is a 369-residue protein sequence, read N- to C-terminus: Immunoglobulin superfamily member 5 (369 aa).

The signal sequence occupies residues 1–24 (MEGSWRDVLAVLVILAQLTVSGSS). Ig-like V-type domains lie at 25–125 (YQII…LSVQ) and 128–217 (GTLN…LTVN). The Extracellular segment spans residues 25 to 239 (YQIIEGPRNV…GEGQALPTWA (215 aa)). 2 N-linked (GlcNAc...) asparagine glycosylation sites follow: Asn33 and Asn45. Cys46 and Cys109 are disulfide-bonded. N-linked (GlcNAc...) asparagine glycans are attached at residues Asn146, Asn196, and Asn217. Cys149 and Cys201 are disulfide-bonded. The chain crosses the membrane as a helical span at residues 240-260 (IILLAVAFSLLLILIIALIII). Residues 261–369 (FCCCCVSRRE…PQKIRNVTIV (109 aa)) are Cytoplasmic-facing. The disordered stretch occupies residues 321-354 (PKSGEVSLPEQRSSLPQQELDKHRPSPVTHPRVS).

Belongs to the immunoglobulin superfamily. In terms of assembly, interacts with MAGI1 at tight junctions, forms a tripartite complex with NPHS1. Interacts with LNX1 isoform 2 via its PDZ 2 domain, it may also interact with other isoforms containing this domain. In kidney, it is found in glomeruli and in the proximal tubules (at protein level).

The protein resides in the apical cell membrane. The protein localises to the cell junction. It is found in the tight junction. Its function is as follows. Provides, together with MAGI1, an adhesion machinery at tight junctions, which may regulate the permeability of kidney glomerulus and small intestinal epithelial cells. Mediates calcium-independent homophilic cell adhesion. In testis, it may function as a cell adhesion molecule rather than a tight-junction protein. It may participate in the adhesion between spermatogonia-spermatogonia, spermatogonia-Sertoli cells, and Sertoli cells-Sertoli cells. In Rattus norvegicus (Rat), this protein is Immunoglobulin superfamily member 5 (Igsf5).